Consider the following 272-residue polypeptide: MIPPKRNKHFFVKIVLALEYDGRGYCGWQKQPGCLSVQSRLESALSGVAGRQIQVVAAGRTDAGVHALCQVVHLETCVRRPLNAWIRGTNALLPGDISILEASEVSDDFHARFSATERTYLYYLLSRPARPGIHHGKIGWVHYPLDLEKMQMAAKLLIGKHDFSAFRSSECQSRTAIRQLTRLNISQHQQLFVFEFCANAFLHHMVRNILGGLVYIGRGKYPPEWMRILLEKRDRTLAAPTFSPDGLYLSGVRYDARWNLPVFNVTRPLDII.

D62 acts as the Nucleophile in catalysis. Y120 contributes to the substrate binding site.

Belongs to the tRNA pseudouridine synthase TruA family. In terms of assembly, homodimer.

It carries out the reaction uridine(38/39/40) in tRNA = pseudouridine(38/39/40) in tRNA. Functionally, formation of pseudouridine at positions 38, 39 and 40 in the anticodon stem and loop of transfer RNAs. The polypeptide is tRNA pseudouridine synthase A (Nitrosomonas europaea (strain ATCC 19718 / CIP 103999 / KCTC 2705 / NBRC 14298)).